We begin with the raw amino-acid sequence, 838 residues long: Periplasmic nitrate reductase (838 aa).

A signal peptide (tat-type signal) is located at residues 1-29; the sequence is MDMSRRTLLKAQAAAAAAAVAGIDLPAEA. The 4Fe-4S Mo/W bis-MGD-type domain occupies 40-96; it reads LKWSKAPCRFCGTGCGVMVGVKDGRVVATHGDMQAEVNRGLNCVKGYFLSKIMYGAD. [4Fe-4S] cluster contacts are provided by cysteine 47, cysteine 50, cysteine 54, and cysteine 82. Mo-bis(molybdopterin guanine dinucleotide)-binding positions include lysine 84, glutamine 151, asparagine 176, cysteine 180, 213 to 220, 244 to 248, 263 to 265, methionine 374, glutamine 378, asparagine 484, 510 to 511, lysine 533, aspartate 560, and 720 to 729; these read WGSNMAEM, STYEH, GTD, SD, and TGRVLEHWHS. Residue phenylalanine 796 coordinates substrate. Mo-bis(molybdopterin guanine dinucleotide) is bound by residues asparagine 804 and lysine 821.

The protein belongs to the prokaryotic molybdopterin-containing oxidoreductase family. NasA/NapA/NarB subfamily. In terms of assembly, component of the periplasmic nitrate reductase NapAB complex composed of NapA and NapB. The cofactor is [4Fe-4S] cluster. Mo-bis(molybdopterin guanine dinucleotide) serves as cofactor. Post-translationally, predicted to be exported by the Tat system. The position of the signal peptide cleavage has not been experimentally proven.

It localises to the periplasm. The enzyme catalyses 2 Fe(II)-[cytochrome] + nitrate + 2 H(+) = 2 Fe(III)-[cytochrome] + nitrite + H2O. Functionally, catalytic subunit of the periplasmic nitrate reductase complex NapAB. Receives electrons from NapB and catalyzes the reduction of nitrate to nitrite. The chain is Periplasmic nitrate reductase from Methylobacterium sp. (strain 4-46).